The chain runs to 624 residues: Heat shock factor protein 5 (624 aa).

Residues 11 to 228 (NPNNFPAKLW…FHRSFRRDNL (218 aa)) mediate DNA binding. Disordered regions lie at residues 52–77 (LSPP…SGVG), 112–138 (GAAG…HSPH), 186–214 (SASA…HGPV), 429–461 (CPSS…LEPL), and 572–605 (GPAN…DLHL). Composition is skewed to gly residues over residues 58–77 (GAGG…SGVG) and 112–127 (GAAG…GPAG). Low complexity-rich tracts occupy residues 186–197 (SASASTSPLQHQ) and 442–457 (PNAN…QASQ). Ser-600 bears the Phosphoserine mark.

The protein belongs to the HSF family. Homooligomer. Highly expressed in testis particularly in spermatocytes (at protein level). Not expressed in fetal testis and ovary.

The protein resides in the nucleus. It localises to the chromosome. DNA-binding transcription factor that is essential for male fertility, spermatogenesis and meiotic prophase progression in spermatocytes under non-stress conditions. Positvely and negatively regulates gene expression to ensure progression of meiotic prophase beyond pachytene stage in spermatocytes. Plays a role in male germline meiotic sex chromosome remodeling and silencing through regulation of SMARCA4. The chain is Heat shock factor protein 5 (Hsf5) from Mus musculus (Mouse).